The primary structure comprises 659 residues: 1,4-alpha-glucan branching enzyme GlgB 2 (659 aa).

Residues 1–26 (MRNYKELKHEKNGNVTEKIGENKGKS) are disordered. Asp337 functions as the Nucleophile in the catalytic mechanism. The active-site Proton donor is Glu390.

This sequence belongs to the glycosyl hydrolase 13 family. GlgB subfamily. In terms of assembly, monomer.

It catalyses the reaction Transfers a segment of a (1-&gt;4)-alpha-D-glucan chain to a primary hydroxy group in a similar glucan chain.. It functions in the pathway glycan biosynthesis; glycogen biosynthesis. In terms of biological role, catalyzes the formation of the alpha-1,6-glucosidic linkages in glycogen by scission of a 1,4-alpha-linked oligosaccharide from growing alpha-1,4-glucan chains and the subsequent attachment of the oligosaccharide to the alpha-1,6 position. The protein is 1,4-alpha-glucan branching enzyme GlgB 2 of Clostridium perfringens (strain SM101 / Type A).